The sequence spans 403 residues: Octaketide synthase 2 (403 aa).

C174 is an active-site residue. CoA contacts are provided by residues S281 and 318–321 (GGRA).

It belongs to the thiolase-like superfamily. Chalcone/stilbene synthases family. As to quaternary structure, homodimer.

It functions in the pathway secondary metabolite biosynthesis; flavonoid biosynthesis. Functionally, catalyzes the iterative condensations of 8 molecules of malonyl-CoA to produce aromatic octaketides, SEK4 and SEK4b, the products of the minimal polyketide synthase for the benzoisochromanequinone actinorhodin. May be involved in the biosynthesis of the octaketide barbaloin. This is Octaketide synthase 2 (PKS4) from Aloe arborescens (Kidachi aloe).